Reading from the N-terminus, the 125-residue chain is Calcitonin receptor-stimulating peptide 2 (125 aa).

An N-terminal signal peptide occupies residues 1–25 (MGFWKFLPFLVLSFLVVYQAGMFQA). A propeptide spanning residues 26–77 (APFRSALENDFDPAILTEKEMCLLLAAVMNDYVQMKTSELKQEAEHFHITAQ) is cleaved from the precursor. Cys81 and Cys86 are oxidised to a cystine.

Belongs to the calcitonin family.

The protein resides in the secreted. The chain is Calcitonin receptor-stimulating peptide 2 (CRSP2) from Capra hircus (Goat).